We begin with the raw amino-acid sequence, 219 residues long: UPF0376 protein C36C5.12 (219 aa).

Topologically, residues 1-20 are cytoplasmic; that stretch reads MGRLDVKNSWIEFHQDEMTS. A helical; Signal-anchor for type II membrane protein transmembrane segment spans residues 21–43; sequence FLKLAIIGTVLLGVAHGANLTAA. The Extracellular segment spans residues 44–219; sequence EKETYCELRS…VSKCDFSRLG (176 aa). N104 and N204 each carry an N-linked (GlcNAc...) asparagine glycan.

This sequence belongs to the UPF0376 family.

It is found in the membrane. This Caenorhabditis elegans protein is UPF0376 protein C36C5.12.